The following is a 598-amino-acid chain: Dihydroxy-acid dehydratase, mitochondrial (598 aa).

The N-terminal 18 residues, 1-18 (MMFCKLLRCQNGIASKRA), are a transit peptide targeting the mitochondrion. Cys84 serves as a coordination point for [2Fe-2S] cluster. A Mg(2+)-binding site is contributed by Asp116. Cys157 contacts [2Fe-2S] cluster. Asp158 contacts Mg(2+). Residue Cys232 coordinates [2Fe-2S] cluster. Glu485 lines the Mg(2+) pocket. Ser511 (proton acceptor) is an active-site residue.

The protein belongs to the IlvD/Edd family. [2Fe-2S] cluster serves as cofactor. Mg(2+) is required as a cofactor.

The protein localises to the mitochondrion. It carries out the reaction (2R)-2,3-dihydroxy-3-methylbutanoate = 3-methyl-2-oxobutanoate + H2O. The enzyme catalyses (2R,3R)-2,3-dihydroxy-3-methylpentanoate = (S)-3-methyl-2-oxopentanoate + H2O. The protein operates within amino-acid biosynthesis; L-isoleucine biosynthesis; L-isoleucine from 2-oxobutanoate: step 3/4. Its pathway is amino-acid biosynthesis; L-valine biosynthesis; L-valine from pyruvate: step 3/4. Dihydroxyacid dehydratase that catalyzes the third step in the common pathway leading to biosynthesis of branched-chain amino acids. Catalyzes the dehydration of (2R,3R)-2,3-dihydroxy-3-methylpentanoate (2,3-dihydroxy-3-methylvalerate) into 2-oxo-3-methylpentanoate (2-oxo-3-methylvalerate) and of (2R)-2,3-dihydroxy-3-methylbutanoate (2,3-dihydroxyisovalerate) into 2-oxo-3-methylbutanoate (2-oxoisovalerate), the penultimate precursor to L-isoleucine and L-valine, respectively. This Schizosaccharomyces pombe (strain 972 / ATCC 24843) (Fission yeast) protein is Dihydroxy-acid dehydratase, mitochondrial.